Consider the following 224-residue polypeptide: BTB/POZ domain-containing protein At5g48510 (224 aa).

The region spanning 24–98 (VDVMLKAKNS…ICSDGSMLSA (75 aa)) is the BTB domain.

In terms of assembly, interacts with CUL3A.

Its pathway is protein modification; protein ubiquitination. Its function is as follows. May act as a substrate-specific adapter of an E3 ubiquitin-protein ligase complex (CUL3-RBX1-BTB) which mediates the ubiquitination and subsequent proteasomal degradation of target proteins. In Arabidopsis thaliana (Mouse-ear cress), this protein is BTB/POZ domain-containing protein At5g48510.